Consider the following 90-residue polypeptide: uncharacterized protein (90 aa).

Positions 1-21 (MFKFSIPLLLFIFLFFSCINS) are cleaved as a signal peptide. The tract at residues 56 to 90 (SNEKLPERILSGSSGSCSSCSISSSNGSSSRSSKQ) is disordered. A compositionally biased stretch (low complexity) spans 66-90 (SGSSGSCSSCSISSSNGSSSRSSKQ). The N-linked (GlcNAc...) asparagine glycan is linked to Asn81.

This is an uncharacterized protein from Dictyostelium discoideum (Social amoeba).